We begin with the raw amino-acid sequence, 199 residues long: DnaJ homolog subfamily C member 5B (199 aa).

Phosphoserine occurs at positions 14 and 16. Residues 19–84 form the J domain; the sequence is ALYEILGLHK…SKRNIYDKYG (66 aa).

In terms of assembly, interacts with the chaperone complex consisting of HSC70 and SGTA. Palmitoylated.

It localises to the membrane. The protein is DnaJ homolog subfamily C member 5B (DNAJC5B) of Sus scrofa (Pig).